Reading from the N-terminus, the 373-residue chain is Protein MGF 360-6L (373 aa).

The protein belongs to the asfivirus MGF 360 family.

Plays a role in virus cell tropism, and may be required for efficient virus replication in macrophages. The sequence is that of Protein MGF 360-6L from Ornithodoros (relapsing fever ticks).